We begin with the raw amino-acid sequence, 123 residues long: Holo-[acyl-carrier-protein] synthase (123 aa).

Residues Asp-9 and Glu-57 each contribute to the Mg(2+) site.

Belongs to the P-Pant transferase superfamily. AcpS family. It depends on Mg(2+) as a cofactor.

It is found in the cytoplasm. The enzyme catalyses apo-[ACP] + CoA = holo-[ACP] + adenosine 3',5'-bisphosphate + H(+). Its function is as follows. Transfers the 4'-phosphopantetheine moiety from coenzyme A to a Ser of acyl-carrier-protein. The protein is Holo-[acyl-carrier-protein] synthase of Streptomyces coelicolor (strain ATCC BAA-471 / A3(2) / M145).